The chain runs to 86 residues: Small ribosomal subunit protein bS16 (86 aa).

It belongs to the bacterial ribosomal protein bS16 family.

In Bordetella bronchiseptica (strain ATCC BAA-588 / NCTC 13252 / RB50) (Alcaligenes bronchisepticus), this protein is Small ribosomal subunit protein bS16.